Reading from the N-terminus, the 652-residue chain is Engulfment and cell motility protein 3 (652 aa).

The region spanning 307–479 (EQREQLQALR…VVREQLARTL (173 aa)) is the ELMO domain.

As to quaternary structure, probably interacts directly with the SH3-domain of DOCK1 via its SH3-binding site. Part of a complex with DOCK1 and RAC1. Interacts with ADGRB3.

Its subcellular location is the cytoplasm. Functionally, involved in cytoskeletal rearrangements required for phagocytosis of apoptotic cells and cell motility. Acts in association with DOCK1 and CRK. Was initially proposed to be required in complex with DOCK1 to activate Rac Rho small GTPases. May enhance the guanine nucleotide exchange factor (GEF) activity of DOCK1. The sequence is that of Engulfment and cell motility protein 3 (ELMO3) from Bos taurus (Bovine).